Reading from the N-terminus, the 403-residue chain is Zinc finger HIT domain-containing protein 2 (403 aa).

Methionine 1 carries the N-acetylmethionine modification. Zn(2+)-binding residues include cysteine 7, cysteine 10, cysteine 22, cysteine 25, cysteine 30, cysteine 34, histidine 38, and cysteine 41. The HIT-type zinc-finger motif lies at 7-41 (CGFCPAGEVQPARYTCPRCNAPYCSLRCYRTHGTC). The disordered stretch occupies residues 72-98 (RQQRETEDEPGEAGLSSGPAPGGLSGL). The residue at position 161 (threonine 161) is a Phosphothreonine.

Interacts (via HIT-type zinc finger) with RUVBL2 in the presence of ATP or ADP; shows a stronger interaction in the presence of ADP. Low expression in most tissues; highly expressed in testis.

In terms of biological role, may act as a bridging factor mediating the interaction between the R2TP/Prefoldin-like (R2TP/PFDL) complex and U5 small nuclear ribonucleoprotein (U5 snRNP). Required for the interaction of R2TP complex subunit RPAP3 and prefoldin-like subunit URI1 with U5 snRNP proteins EFTUD2 and PRPF8. May play a role in regulating the composition of the U5 snRNP complex. The protein is Zinc finger HIT domain-containing protein 2 (ZNHIT2) of Homo sapiens (Human).